A 158-amino-acid polypeptide reads, in one-letter code: NAD(P)H-quinone oxidoreductase subunit N (158 aa).

The protein belongs to the complex I NdhN subunit family. NDH-1 can be composed of about 15 different subunits; different subcomplexes with different compositions have been identified which probably have different functions.

The protein resides in the cellular thylakoid membrane. The enzyme catalyses a plastoquinone + NADH + (n+1) H(+)(in) = a plastoquinol + NAD(+) + n H(+)(out). It catalyses the reaction a plastoquinone + NADPH + (n+1) H(+)(in) = a plastoquinol + NADP(+) + n H(+)(out). Its function is as follows. NDH-1 shuttles electrons from an unknown electron donor, via FMN and iron-sulfur (Fe-S) centers, to quinones in the respiratory and/or the photosynthetic chain. The immediate electron acceptor for the enzyme in this species is believed to be plastoquinone. Couples the redox reaction to proton translocation, and thus conserves the redox energy in a proton gradient. Cyanobacterial NDH-1 also plays a role in inorganic carbon-concentration. The polypeptide is NAD(P)H-quinone oxidoreductase subunit N (Rippkaea orientalis (strain PCC 8801 / RF-1) (Cyanothece sp. (strain PCC 8801))).